The primary structure comprises 322 residues: Labrum-interacting protein from saliva LIPS-2 (322 aa).

Positions 1 to 20 (MKTSLPIVVLLTAVISGVHP) are cleaved as a signal peptide. Cys27 and Cys62 form a disulfide bridge. Residues Asn168 and Asn175 are each glycosylated (N-linked (GlcNAc...) asparagine). A disulfide bridge connects residues Cys249 and Cys295.

Monomer in solution. Interacts (via the N-terminal domain) with cuticular protein Cp19 (via the C-terminus). Proteolytically cleaved by human mast cell tryptase and chymase. Post-translationally, glycosylated. Female salivary gland (at protein level). Female saliva (at protein level).

Its subcellular location is the secreted. Its function is as follows. Salivary protein that promotes mosquito blood feeding on the vertebrate host by inducing morphological changes in the mosquito labrum. Interacts with the mosquito labrum end tip and triggers salivation and probing. Modulates enzymatic activities of human tryptase and chymase. The protein is Labrum-interacting protein from saliva LIPS-2 of Aedes albopictus (Asian tiger mosquito).